A 70-amino-acid polypeptide reads, in one-letter code: Protein SlyX homolog (70 aa).

It belongs to the SlyX family.

In Shewanella denitrificans (strain OS217 / ATCC BAA-1090 / DSM 15013), this protein is Protein SlyX homolog.